The chain runs to 272 residues: ATP-dependent Clp protease proteolytic subunit, mitochondrial (272 aa).

A mitochondrion-targeting transit peptide spans 1-52 (MWPRVLLGEARVAVDGCRALLSRLAVHFSPPWTAVSCSPLRRSLHGTATRAF). Serine 149 serves as the catalytic Nucleophile. The active site involves histidine 174. Position 196 is an N6-succinyllysine (lysine 196). At lysine 207 the chain carries N6-acetyllysine. Residues 240 to 272 (VLVHPPQDGEDEPELVQKETATAPTDPPAPTST) are disordered.

Belongs to the peptidase S14 family. As to quaternary structure, fourteen CLPP subunits assemble into 2 heptameric rings which stack back to back to give a disk-like structure with a central cavity. Component of the ClpXP complex formed by the assembly of two CLPP heptameric rings with two CLPX hexameric rings, giving rise to a symmetrical structure with two central CLPP rings flanked by a CLPX ring at either end of the complex. As to expression, detected in liver (at protein level). High levels found in heart, liver and skeletal muscle.

The protein localises to the mitochondrion matrix. The enzyme catalyses Hydrolysis of proteins to small peptides in the presence of ATP and magnesium. alpha-casein is the usual test substrate. In the absence of ATP, only oligopeptides shorter than five residues are hydrolyzed (such as succinyl-Leu-Tyr-|-NHMec, and Leu-Tyr-Leu-|-Tyr-Trp, in which cleavage of the -Tyr-|-Leu- and -Tyr-|-Trp bonds also occurs).. Protease component of the ClpXP complex that cleaves peptides and various proteins in an ATP-dependent process. Has low peptidase activity in the absence of CLPX. The ClpXP complex can degrade CSN1S1, CSN2 and CSN3, as well as synthetic peptides (in vitro) and may be responsible for a fairly general and central housekeeping function rather than for the degradation of specific substrates. Cleaves PINK1 in the mitochondrion. This is ATP-dependent Clp protease proteolytic subunit, mitochondrial from Mus musculus (Mouse).